The sequence spans 416 residues: Serine/threonine-protein kinase 26 (416 aa).

A2 is modified (N-acetylalanine). The residue at position 4 (S4) is a Phosphoserine. Residues F24–I274 enclose the Protein kinase domain. ATP is bound by residues I30–V38 and K53. The active-site Proton acceptor is D144. T178 carries the phosphothreonine; by autocatalysis modification. A disordered region spans residues A296–E343. Residues S300, S304, S306, S309, and S325 each carry the phosphoserine modification. Phosphothreonine is present on residues T327 and T328. Residues K331 to N340 show a composition bias toward basic and acidic residues.

Belongs to the protein kinase superfamily. STE Ser/Thr protein kinase family. STE20 subfamily. Homodimer. Interacts with PDCD10. Interacts with GOLGA2. Interacts with CTTNBP2NL. Interacts with RIPOR1 (via C-terminus); this interaction occurs in a PDCD10-dependent and Rho-independent manner. Interacts with PDCD10; this interaction is required for the association of STK26 with RIPOR1. Part of the core of STRIPAK complexes composed of PP2A catalytic and scaffolding subunits, the striatins (PP2A regulatory subunits), the striatin-associated proteins MOB4, STRIP1 and STRIP2, PDCD10 and members of the STE20 kinases, such as STK24 and STK26. Requires Mg(2+) as cofactor.

It localises to the cytoplasm. The protein resides in the golgi apparatus. It carries out the reaction L-seryl-[protein] + ATP = O-phospho-L-seryl-[protein] + ADP + H(+). It catalyses the reaction L-threonyl-[protein] + ATP = O-phospho-L-threonyl-[protein] + ADP + H(+). With respect to regulation, interaction with Golgi matrix protein GOLGA2 leads to autophosphorylation on Thr-178, possibly as a consequence of stabilization of dimer formation. May also be activated by C-terminal cleavage. Functionally, serine/threonine-protein kinase that acts as a mediator of cell growth. Modulates apoptosis. In association with STK24 negatively regulates Golgi reorientation in polarized cell migration upon RHO activation. Phosphorylates ATG4B at 'Ser-383', thereby increasing autophagic flux. Part of the striatin-interacting phosphatase and kinase (STRIPAK) complexes. STRIPAK complexes have critical roles in protein (de)phosphorylation and are regulators of multiple signaling pathways including Hippo, MAPK, nuclear receptor and cytoskeleton remodeling. Different types of STRIPAK complexes are involved in a variety of biological processes such as cell growth, differentiation, apoptosis, metabolism and immune regulation. The protein is Serine/threonine-protein kinase 26 of Mus musculus (Mouse).